The sequence spans 150 residues: SsrA-binding protein (150 aa).

Residues 129-150 (ETEKQRDWQREKSRIMKGGSKE) form a disordered region.

This sequence belongs to the SmpB family.

It is found in the cytoplasm. Required for rescue of stalled ribosomes mediated by trans-translation. Binds to transfer-messenger RNA (tmRNA), required for stable association of tmRNA with ribosomes. tmRNA and SmpB together mimic tRNA shape, replacing the anticodon stem-loop with SmpB. tmRNA is encoded by the ssrA gene; the 2 termini fold to resemble tRNA(Ala) and it encodes a 'tag peptide', a short internal open reading frame. During trans-translation Ala-aminoacylated tmRNA acts like a tRNA, entering the A-site of stalled ribosomes, displacing the stalled mRNA. The ribosome then switches to translate the ORF on the tmRNA; the nascent peptide is terminated with the 'tag peptide' encoded by the tmRNA and targeted for degradation. The ribosome is freed to recommence translation, which seems to be the essential function of trans-translation. The protein is SsrA-binding protein of Cupriavidus pinatubonensis (strain JMP 134 / LMG 1197) (Cupriavidus necator (strain JMP 134)).